The chain runs to 340 residues: DNA-directed RNA polymerase subunit alpha (340 aa).

The segment at 1-226 (MLIAQRPSLT…ELFGLARELN (226 aa)) is alpha N-terminal domain (alpha-NTD). An alpha C-terminal domain (alpha-CTD) region spans residues 243–340 (LAADLALPIE…DAGFVETEQY (98 aa)).

This sequence belongs to the RNA polymerase alpha chain family. As to quaternary structure, homodimer. The RNAP catalytic core consists of 2 alpha, 1 beta, 1 beta' and 1 omega subunit. When a sigma factor is associated with the core the holoenzyme is formed, which can initiate transcription.

It catalyses the reaction RNA(n) + a ribonucleoside 5'-triphosphate = RNA(n+1) + diphosphate. DNA-dependent RNA polymerase catalyzes the transcription of DNA into RNA using the four ribonucleoside triphosphates as substrates. This chain is DNA-directed RNA polymerase subunit alpha, found in Streptomyces avermitilis (strain ATCC 31267 / DSM 46492 / JCM 5070 / NBRC 14893 / NCIMB 12804 / NRRL 8165 / MA-4680).